Reading from the N-terminus, the 314-residue chain is Putative peptide transport system permease protein BRA1092/BS1330_II1084 (314 aa).

6 helical membrane passes run 12-32 (AIPVMLIVAILTFLLMKLLPG), 101-121 (LALLAFAITIPVGIIMGVVAA), 135-155 (LALLGVSVPSFWLAILAVILF), 177-197 (WLRSLILPASILALFQIGYLA), 237-257 (VSVLTVSGYIFSLLIGGSVVI), and 286-306 (MLFLGFLFVAINVLVDILYTI). The region spanning 95-304 (LPVTISLALL…AINVLVDILY (210 aa)) is the ABC transmembrane type-1 domain.

It belongs to the binding-protein-dependent transport system permease family. In terms of assembly, the complex is composed of two ATP-binding proteins (BRA1094), two transmembrane proteins (BRA1092 and BRA1093) and a solute-binding protein (BRA1090).

The protein localises to the cell inner membrane. Functionally, probably part of an ABC transporter complex that could be involved in peptide import. Probably responsible for the translocation of the substrate across the membrane. The protein is Putative peptide transport system permease protein BRA1092/BS1330_II1084 of Brucella suis biovar 1 (strain 1330).